We begin with the raw amino-acid sequence, 280 residues long: Merozoite surface protein 2 (280 aa).

The signal sequence occupies residues 1-20 (MKVIKTLSIINFFIFVTFNI). 2 N-linked (GlcNAc...) asparagine glycosylation sites follow: asparagine 22 and asparagine 36. The segment at 44–206 (ANEGSNTKSV…PQTAENENPA (163 aa)) is polymorphic region. The tract at residues 47-242 (GSNTKSVGAN…SQKECTDGNK (196 aa)) is disordered. The tract at residues 51 to 74 (KSVGANAPKADTIASGSQSSTNSA) is 5 X 12 AA tandem repeats of P-P-I-T-T-T-E-S-N-S-R-S. A compositionally biased stretch (low complexity) spans 64–98 (ASGSQSSTNSASTSTTNNGESQTTTPTAADTPTAT). The segment covering 99-149 (ESNSRSPPITTTESNSRSPPITTTESNSRSPPITTTESNSRSPPITTTESN) has biased composition (polar residues). Tandem repeats lie at residues 105–116 (PPITTTESNSRS), 117–128 (PPITTTESNSRS), 129–140 (PPITTTESNSRS), and 141–152 (PPITTTESNSRS). The span at 150 to 163 (SRSPPITTTESSSS) shows a compositional bias: low complexity. One copy of the 5; partial repeat lies at 153–160 (PPITTTES). An N-linked (GlcNAc...) asparagine glycan is attached at asparagine 168. Basic and acidic residues predominate over residues 170-182 (TDGKGEESEKQNE). Residues asparagine 184 and asparagine 229 are each glycosylated (N-linked (GlcNAc...) asparagine). Residues 233-242 (SQKECTDGNK) show a composition bias toward basic and acidic residues. Cysteine 237 and cysteine 245 form a disulfide bridge. Residues asparagine 253 and asparagine 254 are each glycosylated (N-linked (GlcNAc...) asparagine). Asparagine 254 carries GPI-anchor amidated asparagine lipidation. A propeptide spans 255–280 (SSNIASINKFVVLISATLVLSFAIFI) (removed in mature form).

The protein resides in the cell membrane. Functionally, may play a role in the merozoite attachment to the erythrocyte. The polypeptide is Merozoite surface protein 2 (Plasmodium falciparum (isolate K1 / Thailand)).